A 235-amino-acid polypeptide reads, in one-letter code: Phosphoribosylaminoimidazole-succinocarboxamide synthase (235 aa).

Belongs to the SAICAR synthetase family.

It carries out the reaction 5-amino-1-(5-phospho-D-ribosyl)imidazole-4-carboxylate + L-aspartate + ATP = (2S)-2-[5-amino-1-(5-phospho-beta-D-ribosyl)imidazole-4-carboxamido]succinate + ADP + phosphate + 2 H(+). Its pathway is purine metabolism; IMP biosynthesis via de novo pathway; 5-amino-1-(5-phospho-D-ribosyl)imidazole-4-carboxamide from 5-amino-1-(5-phospho-D-ribosyl)imidazole-4-carboxylate: step 1/2. This chain is Phosphoribosylaminoimidazole-succinocarboxamide synthase, found in Clostridium kluyveri (strain NBRC 12016).